A 406-amino-acid polypeptide reads, in one-letter code: GTPase Obg (406 aa).

In terms of domain architecture, Obg spans 1–159; the sequence is MRFVDEAVIT…REIRLELKVL (159 aa). Positions 120–143 are disordered; the sequence is GGEGGLGNTHFKSSTNRAPRKCTT. In terms of domain architecture, OBG-type G spans 160–333; the sequence is ADVGLLGMPN…VVYYLMDQIE (174 aa). GTP is bound by residues 166 to 173, 191 to 195, 213 to 216, 283 to 286, and 314 to 316; these read GMPNAGKS, FTTMV, DIPG, NKLD, and SGL. 2 residues coordinate Mg(2+): S173 and T193. Residues 381-406 form a disordered region; the sequence is ESMMDDDDDFDDDEDDGDVESIYVRD. Residues 383–399 are compositionally biased toward acidic residues; the sequence is MMDDDDDFDDDEDDGDV.

Belongs to the TRAFAC class OBG-HflX-like GTPase superfamily. OBG GTPase family. As to quaternary structure, monomer. Mg(2+) is required as a cofactor.

It is found in the cytoplasm. Its function is as follows. An essential GTPase which binds GTP, GDP and possibly (p)ppGpp with moderate affinity, with high nucleotide exchange rates and a fairly low GTP hydrolysis rate. Plays a role in control of the cell cycle, stress response, ribosome biogenesis and in those bacteria that undergo differentiation, in morphogenesis control. The chain is GTPase Obg from Acinetobacter baumannii (strain ACICU).